The chain runs to 621 residues: ATP-dependent DNA helicase Q1 (621 aa).

The region spanning 100-275 (VNATMARKDI…QKILCVEKCL (176 aa)) is the Helicase ATP-binding domain. 113-120 (MPTGGGKS) contributes to the ATP binding site. The DEVH box signature appears at 219 to 222 (DEVH). Positions 296–451 (SAEDFIENIA…EMVSYCQNIS (156 aa)) constitute a Helicase C-terminal domain. The Zn(2+) site is built by Cys-453, Cys-471, Cys-475, and Cys-478. An N6-acetyllysine mark is found at Lys-514 and Lys-522. A phosphoserine mark is found at Ser-597 and Ser-602.

Belongs to the helicase family. RecQ subfamily. In terms of assembly, may form homodimers or higher order oligomers. Interacts with EXO1. Interacts with MLH1. Interacts with PARP1. It depends on Mg(2+) as a cofactor. Mn(2+) is required as a cofactor. Zn(2+) serves as cofactor.

The protein localises to the nucleus. It catalyses the reaction Couples ATP hydrolysis with the unwinding of duplex DNA by translocating in the 3'-5' direction.. The enzyme catalyses ATP + H2O = ADP + phosphate + H(+). It carries out the reaction dATP + H2O = dADP + phosphate + H(+). DNA helicase that plays a role in DNA damage repair and genome stability. Exhibits a magnesium- and ATP-dependent DNA-helicase activity that unwinds single- and double-stranded DNA in a 3'-5' direction. Plays a role in restoring regressed replication forks. Required to restart stalled replication forks induced by abortive topoisomerase 1 and 2 lesions. May play a role in the repair of DNA that is damaged by ultraviolet light or other mutagens. The chain is ATP-dependent DNA helicase Q1 (Recql) from Rattus norvegicus (Rat).